A 794-amino-acid polypeptide reads, in one-letter code: DNA mismatch repair protein pms1 (794 aa).

2 disordered regions span residues 351–384 (SQIP…SFSY) and 409–442 (GASL…TASS). Positions 352-371 (QIPDSSGDSTDQELPQSIPA) are enriched in polar residues. The segment covering 419–429 (LPERLQKDSMR) has biased composition (basic and acidic residues). Residues 430–442 (RSSPLNEKVTASS) are compositionally biased toward polar residues.

It belongs to the DNA mismatch repair MutL/HexB family.

In terms of biological role, this protein is involved in the repair of mismatches in DNA. The protein is DNA mismatch repair protein pms1 (pms1) of Schizosaccharomyces pombe (strain 972 / ATCC 24843) (Fission yeast).